Reading from the N-terminus, the 89-residue chain is Small ribosomal subunit protein uS14A (89 aa).

This sequence belongs to the universal ribosomal protein uS14 family. As to quaternary structure, part of the 30S ribosomal subunit. Contacts proteins S3 and S10.

Its function is as follows. Binds 16S rRNA, required for the assembly of 30S particles and may also be responsible for determining the conformation of the 16S rRNA at the A site. This chain is Small ribosomal subunit protein uS14A, found in Lacticaseibacillus paracasei (strain ATCC 334 / BCRC 17002 / CCUG 31169 / CIP 107868 / KCTC 3260 / NRRL B-441) (Lactobacillus paracasei).